The sequence spans 62 residues: Small ribosomal subunit protein uS14 (62 aa).

Zn(2+)-binding residues include C25, C28, C41, and C44.

It belongs to the universal ribosomal protein uS14 family. Zinc-binding uS14 subfamily. In terms of assembly, part of the 30S ribosomal subunit. Contacts proteins S3 and S10. Zn(2+) is required as a cofactor.

Binds 16S rRNA, required for the assembly of 30S particles and may also be responsible for determining the conformation of the 16S rRNA at the A site. The polypeptide is Small ribosomal subunit protein uS14 (Sulfurihydrogenibium sp. (strain YO3AOP1)).